Consider the following 287-residue polypeptide: Orotidine 5'-phosphate decarboxylase (287 aa).

Lys-99 acts as the Proton donor in catalysis.

The protein belongs to the OMP decarboxylase family. Type 2 subfamily.

It catalyses the reaction orotidine 5'-phosphate + H(+) = UMP + CO2. It participates in pyrimidine metabolism; UMP biosynthesis via de novo pathway; UMP from orotate: step 2/2. In Clostridium novyi (strain NT), this protein is Orotidine 5'-phosphate decarboxylase.